A 441-amino-acid polypeptide reads, in one-letter code: Tryptophan aminotransferase-related protein 1 (441 aa).

Pyridoxal 5'-phosphate is bound by residues Tyr110, 152-153 (ST), Asn219, 239-242 (DLAY), 262-265 (TVSK), and Arg273. Lys265 carries the post-translational modification N6-(pyridoxal phosphate)lysine.

The protein belongs to the alliinase family. Requires pyridoxal 5'-phosphate as cofactor. In terms of tissue distribution, highly expressed in anthers. Expressed at low levels in ovaries.

It catalyses the reaction L-tryptophan + 2-oxoglutarate = indole-3-pyruvate + L-glutamate. Its pathway is plant hormone metabolism; auxin biosynthesis. Its function is as follows. Probable tryptophan aminotransferase that may be involved in the regulation of auxin production in developing rice grains. The chain is Tryptophan aminotransferase-related protein 1 from Oryza sativa subsp. japonica (Rice).